The primary structure comprises 248 residues: Ubiquinone biosynthesis O-methyltransferase (248 aa).

S-adenosyl-L-methionine-binding residues include Arg41, Gly72, Asp93, and Met136.

This sequence belongs to the methyltransferase superfamily. UbiG/COQ3 family.

It catalyses the reaction a 3-demethylubiquinol + S-adenosyl-L-methionine = a ubiquinol + S-adenosyl-L-homocysteine + H(+). The enzyme catalyses a 3-(all-trans-polyprenyl)benzene-1,2-diol + S-adenosyl-L-methionine = a 2-methoxy-6-(all-trans-polyprenyl)phenol + S-adenosyl-L-homocysteine + H(+). It functions in the pathway cofactor biosynthesis; ubiquinone biosynthesis. Functionally, O-methyltransferase that catalyzes the 2 O-methylation steps in the ubiquinone biosynthetic pathway. The chain is Ubiquinone biosynthesis O-methyltransferase from Brucella melitensis biotype 2 (strain ATCC 23457).